The following is a 572-amino-acid chain: Probable D-xylulose kinase A (572 aa).

Substrate is bound by residues His-95, Arg-166, Asp-282, and Asn-283. ATP contacts are provided by residues Trp-365, 470-471 (GG), and Asn-474.

The protein belongs to the FGGY kinase family.

The protein resides in the cytoplasm. The enzyme catalyses D-xylulose + ATP = D-xylulose 5-phosphate + ADP + H(+). Highly specific D-xylulose kinase which participates in the catabolism of xylose. Xylose is a major component of hemicelluloses such as xylan. Most fungi utilize D-xylose via three enzymatic reactions, xylose reductase (XR), xylitol dehydrogenase (XDH), and xylulokinase, to form xylulose 5-phosphate, which enters pentose phosphate pathway. The sequence is that of Probable D-xylulose kinase A (xkiA) from Aspergillus oryzae (strain ATCC 42149 / RIB 40) (Yellow koji mold).